Consider the following 81-residue polypeptide: Cytochrome b559 subunit alpha (81 aa).

Residues 22 to 36 traverse the membrane as a helical segment; that stretch reads VIHSITIPSLFIAGW. Residue H24 coordinates heme.

Belongs to the PsbE/PsbF family. As to quaternary structure, heterodimer of an alpha subunit and a beta subunit. PSII is composed of 1 copy each of membrane proteins PsbA, PsbB, PsbC, PsbD, PsbE, PsbF, PsbH, PsbI, PsbJ, PsbK, PsbL, PsbM, PsbT, PsbX, PsbY, PsbZ, Psb30/Ycf12, at least 3 peripheral proteins of the oxygen-evolving complex and a large number of cofactors. It forms dimeric complexes. It depends on heme b as a cofactor.

The protein resides in the plastid. It localises to the chloroplast thylakoid membrane. Functionally, this b-type cytochrome is tightly associated with the reaction center of photosystem II (PSII). PSII is a light-driven water:plastoquinone oxidoreductase that uses light energy to abstract electrons from H(2)O, generating O(2) and a proton gradient subsequently used for ATP formation. It consists of a core antenna complex that captures photons, and an electron transfer chain that converts photonic excitation into a charge separation. This Cyanidioschyzon merolae (strain NIES-3377 / 10D) (Unicellular red alga) protein is Cytochrome b559 subunit alpha.